The chain runs to 816 residues: Sucrose synthase 1 (816 aa).

The GT-B glycosyltransferase stretch occupies residues Met280–Thr757.

The protein belongs to the glycosyltransferase 1 family. Plant sucrose synthase subfamily. As to quaternary structure, homotetramer or heterotetramer with SUS2. Expressed in root phloem and leaf mesophyll. Expressed in phloem tissues and aleurone layers of seeds and at lower levels in the pericarp and endosperm cells (at protein level). Predominantly expressed in elongating tissues including roots, developing leaves and internodes.

The enzyme catalyses an NDP-alpha-D-glucose + D-fructose = a ribonucleoside 5'-diphosphate + sucrose + H(+). Sucrose-cleaving enzyme that provides UDP-glucose and fructose for various metabolic pathways. In Oryza sativa subsp. japonica (Rice), this protein is Sucrose synthase 1 (SUS1).